Reading from the N-terminus, the 147-residue chain is UPF0178 protein CV_1768 (147 aa).

Belongs to the UPF0178 family.

This is UPF0178 protein CV_1768 from Chromobacterium violaceum (strain ATCC 12472 / DSM 30191 / JCM 1249 / CCUG 213 / NBRC 12614 / NCIMB 9131 / NCTC 9757 / MK).